Consider the following 280-residue polypeptide: uncharacterized protein (280 aa).

It to E.coli YgfZ (UP14) and B.aphidicola (subsp. Acyrthosiphon pisum) BU435.

This is an uncharacterized protein from Haemophilus influenzae (strain ATCC 51907 / DSM 11121 / KW20 / Rd).